We begin with the raw amino-acid sequence, 186 residues long: Large ribosomal subunit protein uL22 (186 aa).

2 stretches are compositionally biased toward basic and acidic residues: residues Val-157 to Lys-167 and Arg-177 to Glu-186. The segment at Val-157–Glu-186 is disordered.

The protein belongs to the universal ribosomal protein uL22 family.

The protein is Large ribosomal subunit protein uL22 (RpL17) of Drosophila yakuba (Fruit fly).